Reading from the N-terminus, the 46-residue chain is Protein krueppel (46 aa).

3 consecutive C2H2-type zinc fingers follow at residues methionine 1–histidine 4, tyrosine 10–histidine 32, and tyrosine 38–lysine 46.

Belongs to the krueppel C2H2-type zinc-finger protein family.

Its subcellular location is the nucleus. Its function is as follows. Krueppel is a gap class segmentation protein. The chain is Protein krueppel (Kr) from Lithobius forficatus (Centipede).